The primary structure comprises 124 residues: Basic leucine zipper transcriptional factor ATF-like (124 aa).

The segment covering 1–23 (MAQGSDNNDTSYTKSPSPGNKQG) has biased composition (polar residues). Residues 1-60 (MAQGSDNNDTSYTKSPSPGNKQGSSDDMRKVMRREKNRIAAQKSRMRQTQKADSLHLESE) are disordered. Positions 27 to 90 (DMRKVMRREK…KYLSTVLSNH (64 aa)) constitute a bZIP domain. Positions 29-51 (RKVMRREKNRIAAQKSRMRQTQK) are basic motif. A leucine-zipper region spans residues 55–83 (LHLESESLEKENAALRKEVKRLTEEAKYL).

Belongs to the bZIP family.

The protein localises to the nucleus. Its subcellular location is the cytoplasm. AP-1 family transcription factor that controls the differentiation of lineage-specific cells in the immune system: specifically mediates the differentiation of T-helper 17 cells (Th17), follicular T-helper cells (TfH), CD8(+) dendritic cells and class-switch recombination (CSR) in B-cells. In Danio rerio (Zebrafish), this protein is Basic leucine zipper transcriptional factor ATF-like (batf).